Here is a 433-residue protein sequence, read N- to C-terminus: Glutamate-1-semialdehyde 2,1-aminomutase (433 aa).

The residue at position 271 (K271) is an N6-(pyridoxal phosphate)lysine.

This sequence belongs to the class-III pyridoxal-phosphate-dependent aminotransferase family. HemL subfamily. Homodimer. Pyridoxal 5'-phosphate serves as cofactor.

Its subcellular location is the cytoplasm. It carries out the reaction (S)-4-amino-5-oxopentanoate = 5-aminolevulinate. The protein operates within porphyrin-containing compound metabolism; protoporphyrin-IX biosynthesis; 5-aminolevulinate from L-glutamyl-tRNA(Glu): step 2/2. It participates in porphyrin-containing compound metabolism; chlorophyll biosynthesis. The polypeptide is Glutamate-1-semialdehyde 2,1-aminomutase (Prochlorococcus marinus (strain AS9601)).